We begin with the raw amino-acid sequence, 587 residues long: MKEFKVTTGPLPGSEKIYVEGERFPFLRVPMRRIRMSDTILENGEREKNEDVVVYDTSGPYTDTSYEVNLHRGVPKIREQWIEDRGDTLRLEGLSSEYGRMRQSDASLEELRYEHVCTRPRAAKDGCATQLYYARQGIVTPEMEFVAIRENQLIDQVRTRYRAEEGEPLGAVIPRKITPEFVRDEIAAGRAILPANINHPESEPMIIGRNFLVKINANIGNSPISSTIEEEVEKAVWAIRWGADTVMDLSTGDHIHETREWIIRNSPVPIGTVPLYQTLEKVQGDVTKLNWEIFRDTLIEQAEQGVDYFTIHAGLRWHHVPLTLRRLTGIVSRGGSIIANWCTTHKRESFIYEHFEEICRILAHYDVAISLGDGLRPGCIHDANDAAQIAELKTLGELTEIAWKYNVQTIIEGPGHVPMHKIRENMEIQLEACHGAPFYTLGPLVSDVASGYDHITSAIGAAQIGWFGTAMLCYVTQKEHLGLPNREDVREGVVTYKLAAHAADLAKGHPTAYWRDYMMSKARFEFRWKDQFHLSLDPEKAIQFHDATLPDEGHKEAHFCSMCGEHFCSMRANKNFRKLLNEEAVSK.

Substrate-binding positions include Asn-218, Met-247, Tyr-276, His-312, 332–334, 373–376, and Glu-412; these read SRG and DGLR. Position 416 (His-416) interacts with Zn(2+). Tyr-439 serves as a coordination point for substrate. His-480 lines the Zn(2+) pocket. [4Fe-4S] cluster is bound by residues Cys-560, Cys-563, and Cys-568.

It belongs to the ThiC family. [4Fe-4S] cluster serves as cofactor.

It catalyses the reaction 5-amino-1-(5-phospho-beta-D-ribosyl)imidazole + S-adenosyl-L-methionine = 4-amino-2-methyl-5-(phosphooxymethyl)pyrimidine + CO + 5'-deoxyadenosine + formate + L-methionine + 3 H(+). It functions in the pathway cofactor biosynthesis; thiamine diphosphate biosynthesis. Catalyzes the synthesis of the hydroxymethylpyrimidine phosphate (HMP-P) moiety of thiamine from aminoimidazole ribotide (AIR) in a radical S-adenosyl-L-methionine (SAM)-dependent reaction. This Porphyromonas gingivalis (strain ATCC 33277 / DSM 20709 / CIP 103683 / JCM 12257 / NCTC 11834 / 2561) protein is Phosphomethylpyrimidine synthase.